We begin with the raw amino-acid sequence, 151 residues long: Large ribosomal subunit protein bL9 (151 aa).

The protein belongs to the bacterial ribosomal protein bL9 family.

Binds to the 23S rRNA. The polypeptide is Large ribosomal subunit protein bL9 (Mycolicibacterium vanbaalenii (strain DSM 7251 / JCM 13017 / BCRC 16820 / KCTC 9966 / NRRL B-24157 / PYR-1) (Mycobacterium vanbaalenii)).